A 150-amino-acid polypeptide reads, in one-letter code: Ribonuclease H (150 aa).

The RNase H type-1 domain maps to 1-142; the sequence is MSDSVEIFTD…ADQLANRGVD (142 aa). Mg(2+) contacts are provided by D10, E48, D70, and D134.

Belongs to the RNase H family. Monomer. The cofactor is Mg(2+).

It is found in the cytoplasm. The catalysed reaction is Endonucleolytic cleavage to 5'-phosphomonoester.. Functionally, endonuclease that specifically degrades the RNA of RNA-DNA hybrids. The protein is Ribonuclease H of Pseudomonas fluorescens (strain ATCC BAA-477 / NRRL B-23932 / Pf-5).